Here is a 77-residue protein sequence, read N- to C-terminus: Conotoxin VnMEKL-0111 (77 aa).

A signal peptide spans 1 to 19 (MEKLTILLLVAAVLMSTQA). The propeptide occupies 20–46 (LIQHDGEKSQKAKMKFLTARTLSAKTR). Cystine bridges form between cysteine 50-cysteine 66, cysteine 57-cysteine 71, and cysteine 65-cysteine 75.

Belongs to the conotoxin O2 superfamily. Expressed by the venom duct.

The protein localises to the secreted. In Conus ventricosus (Mediterranean cone), this protein is Conotoxin VnMEKL-0111.